The primary structure comprises 1029 residues: uncharacterized protein (1029 aa).

Positions Met-1–Lys-23 are enriched in basic and acidic residues. Positions Met-1–Arg-31 are disordered. Residues Thr-39–Gln-168 enclose the Guanylate cyclase domain. Gly-261–Ser-268 contributes to the ATP binding site.

This is an uncharacterized protein from Rhizobium meliloti (strain 1021) (Ensifer meliloti).